Reading from the N-terminus, the 286-residue chain is Nucleotide-binding protein HS_1178 (286 aa).

Position 8–15 (8–15 (GRSGAGKS)) interacts with ATP. 56 to 59 (DIRN) contributes to the GTP binding site.

This sequence belongs to the RapZ-like family.

Functionally, displays ATPase and GTPase activities. The protein is Nucleotide-binding protein HS_1178 of Histophilus somni (strain 129Pt) (Haemophilus somnus).